A 538-amino-acid polypeptide reads, in one-letter code: Chaperonin GroEL (538 aa).

ATP contacts are provided by residues 29–32, 86–90, G413, 479–481, and D495; these read TLGP, DGTTT, and DAL.

Belongs to the chaperonin (HSP60) family. As to quaternary structure, forms a cylinder of 14 subunits composed of two heptameric rings stacked back-to-back. Interacts with the co-chaperonin GroES.

It is found in the cytoplasm. The catalysed reaction is ATP + H2O + a folded polypeptide = ADP + phosphate + an unfolded polypeptide.. In terms of biological role, together with its co-chaperonin GroES, plays an essential role in assisting protein folding. The GroEL-GroES system forms a nano-cage that allows encapsulation of the non-native substrate proteins and provides a physical environment optimized to promote and accelerate protein folding. The chain is Chaperonin GroEL from Fervidobacterium nodosum (strain ATCC 35602 / DSM 5306 / Rt17-B1).